The chain runs to 450 residues: Tubulin alpha chain (450 aa).

Position 11 (glutamine 11) interacts with GTP. Position 40 is an N6-acetyllysine (lysine 40). GTP contacts are provided by glutamate 71, serine 140, glycine 144, threonine 145, threonine 179, asparagine 206, and asparagine 228. Glutamate 71 is a Mg(2+) binding site. Residue glutamate 254 is part of the active site. A disordered region spans residues 431–450 (DYEEVGTDSVGEEDEEGEEY).

This sequence belongs to the tubulin family. Dimer of alpha and beta chains. A typical microtubule is a hollow water-filled tube with an outer diameter of 25 nm and an inner diameter of 15 nM. Alpha-beta heterodimers associate head-to-tail to form protofilaments running lengthwise along the microtubule wall with the beta-tubulin subunit facing the microtubule plus end conferring a structural polarity. Microtubules usually have 13 protofilaments but different protofilament numbers can be found in some organisms and specialized cells. Requires Mg(2+) as cofactor. Some glutamate residues at the C-terminus are polyglycylated, resulting in polyglycine chains on the gamma-carboxyl group. Glycylation is mainly limited to tubulin incorporated into axonemes (cilia and flagella) whereas glutamylation is prevalent in neuronal cells, centrioles, axonemes, and the mitotic spindle. Both modifications can coexist on the same protein on adjacent residues, and lowering polyglycylation levels increases polyglutamylation, and reciprocally. The precise function of polyglycylation is still unclear. Post-translationally, some glutamate residues at the C-terminus are polyglutamylated, resulting in polyglutamate chains on the gamma-carboxyl group. Polyglutamylation plays a key role in microtubule severing by spastin (SPAST). SPAST preferentially recognizes and acts on microtubules decorated with short polyglutamate tails: severing activity by SPAST increases as the number of glutamates per tubulin rises from one to eight, but decreases beyond this glutamylation threshold. In terms of processing, acetylation of alpha chains at Lys-40 is located inside the microtubule lumen. This modification has been correlated with increased microtubule stability, intracellular transport and ciliary assembly. Undergoes a tyrosination/detyrosination cycle, the cyclic removal and re-addition of a C-terminal tyrosine residue by the enzymes tubulin tyrosine carboxypeptidase (MATCAP, VASH1 or VASH2) and tubulin tyrosine ligase (TTL), respectively. Post-translationally, tyrosination promotes microtubule interaction with CAP-Gly microtubule plus-end tracking proteins. Tyrosinated tubulins regulate the initiation of dynein-driven motility. In terms of processing, detyrosination is involved in metaphase plate congression by guiding chromosomes during mitosis. Detyrosination increases microtubules-dependent mechanotransduction in dystrophic cardiac and skeletal muscle. In cardiomyocytes, detyrosinated microtubules are required to resist to contractile compression during contraction.

It is found in the cytoplasm. It localises to the cytoskeleton. The enzyme catalyses GTP + H2O = GDP + phosphate + H(+). Tubulin is the major constituent of microtubules, a cylinder consisting of laterally associated linear protofilaments composed of alpha- and beta-tubulin heterodimers. Microtubules grow by the addition of GTP-tubulin dimers to the microtubule end, where a stabilizing cap forms. Below the cap, tubulin dimers are in GDP-bound state, owing to GTPase activity of alpha-tubulin. The polypeptide is Tubulin alpha chain (Oncorhynchus keta (Chum salmon)).